The following is a 236-amino-acid chain: Small ribosomal subunit protein uS2c (236 aa).

The protein belongs to the universal ribosomal protein uS2 family.

It is found in the plastid. Its subcellular location is the chloroplast. The polypeptide is Small ribosomal subunit protein uS2c (rps2) (Lolium perenne (Perennial ryegrass)).